Here is a 183-residue protein sequence, read N- to C-terminus: MFRVVHGDITRFKAEAIVNAANKYLEHGGGVAYAIAKAASGDVSEYIRISKEEMRKQIGRDWIEHGEVVVTPPLNLAKNGVKYVIHTVGPYCGGKWDEDKRKKLELAILGALKKADELGVRSIAFPAISAGIYGCPLEEVVKTFKLVVNEFLKSAKNVTDVYLVLYSERDYEVALKVLERDEL.

Positions 1–182 (MFRVVHGDIT…VALKVLERDE (182 aa)) constitute a Macro domain.

This is an uncharacterized protein from Pyrococcus abyssi (strain GE5 / Orsay).